The following is a 122-amino-acid chain: Large ribosomal subunit protein uL14 (122 aa).

It belongs to the universal ribosomal protein uL14 family. In terms of assembly, part of the 50S ribosomal subunit. Forms a cluster with proteins L3 and L19. In the 70S ribosome, L14 and L19 interact and together make contacts with the 16S rRNA in bridges B5 and B8.

Binds to 23S rRNA. Forms part of two intersubunit bridges in the 70S ribosome. This is Large ribosomal subunit protein uL14 from Herpetosiphon aurantiacus (strain ATCC 23779 / DSM 785 / 114-95).